The following is a 478-amino-acid chain: Septin-4 (478 aa).

The tract at residues 38–115 (VKDFSGNESC…RSPWGKLDPY (78 aa)) is disordered. The segment covering 95–108 (APAPLSPSARPRSP) has biased composition (low complexity). Serine 117 and serine 118 each carry phosphoserine. The 274-residue stretch at 141–414 (KGFDFTLMVA…ENYRAQCIQS (274 aa)) folds into the Septin-type G domain. A G1 motif region spans residues 151-158 (GESGLGKS). GTP is bound by residues 151–158 (GESGLGKS) and threonine 185. The tract at residues 208–211 (DTPG) is G3 motif. A G4 motif region spans residues 289–292 (AKAD). 290-298 (KADTLTPPE) contacts GTP. Phosphoserine is present on serine 325. The GTP site is built by glycine 348 and arginine 363. Residues 425-448 (RNKLTRESGTDLPIPAVPPGTDPE) form a disordered region. The residue at position 432 (serine 432) is a Phosphoserine. Threonine 434 carries the phosphothreonine modification. A coiled-coil region spans residues 446-478 (DPETEKLIREKDEELRRMQEMLHKIQKQMKETY).

This sequence belongs to the TRAFAC class TrmE-Era-EngA-EngB-Septin-like GTPase superfamily. Septin GTPase family. As to quaternary structure, septins polymerize into heterooligomeric protein complexes that form filaments, and can associate with cellular membranes, actin filaments and microtubules. GTPase activity is required for filament formation. Interacts with SEPTIN8. Component of a septin core octameric complex consisting of SEPTIN12, SEPTIN7, SEPTIN6 and SEPTIN2 or SEPTIN4 in the order 12-7-6-2-2-6-7-12 or 12-7-6-4-4-6-7-12. Interacts with SEPTIN14 (via C-terminus). Interacts with DYRK1A. Interacts with SLC6A3/DAT and SNCA/alpha-synuclein. Interacts with STX1A; in the striatum. Interacts with XIAP (via BIR3 domain) following the induction of apoptosis. Interacts with AREL1 (via HECT domain); in the cytoplasm following induction of apoptosis. In terms of processing, ubiquitinated by AREL1. Post-translationally, phosphorylated by DYRK1A.

Its subcellular location is the cytoplasm. The protein resides in the cell projection. The protein localises to the cilium. It localises to the flagellum. It is found in the cytoplasmic vesicle. Its subcellular location is the secretory vesicle. The protein resides in the axon. The protein localises to the dendrite. It localises to the perikaryon. It is found in the synapse. Functionally, filament-forming cytoskeletal GTPase. Pro-apoptotic protein involved in LGR5-positive intestinal stem cell and Paneth cell expansion in the intestines, via its interaction with XIAP. May also play a role in the regulation of cell fate in the intestine. Positive regulator of apoptosis involved in hematopoietic stem cell homeostasis; via its interaction with XIAP. Negative regulator of repair and hair follicle regeneration in response to injury, due to inhibition of hair follicle stem cell proliferation, potentially via its interaction with XIAP. Plays an important role in male fertility and sperm motility. During spermiogenesis, essential for the establishment of the annulus (a fibrous ring structure connecting the midpiece and the principal piece of the sperm flagellum) which is a requisite for the structural and mechanical integrity of the sperm. Involved in the migration of cortical neurons and the formation of neuron leading processes during embryonic development. Required for dopaminergic metabolism in presynaptic autoreceptors; potentially via activity as a presynaptic scaffold protein. In Pongo abelii (Sumatran orangutan), this protein is Septin-4.